Consider the following 477-residue polypeptide: Trigger factor (477 aa).

A PPIase FKBP-type domain is found at 169-254 (EDRVTIDYLG…VKEVAKPNEL (86 aa)). Residues 435–477 (VSKEELTAEDEDAASEAKPAKKAAAKKKAAPKKKAEEGKSEEA) are disordered. Residues 454–466 (AKKAAAKKKAAPK) are compositionally biased toward basic residues. Residues 467–477 (KKAEEGKSEEA) show a composition bias toward basic and acidic residues.

Belongs to the FKBP-type PPIase family. Tig subfamily.

The protein resides in the cytoplasm. It carries out the reaction [protein]-peptidylproline (omega=180) = [protein]-peptidylproline (omega=0). Functionally, involved in protein export. Acts as a chaperone by maintaining the newly synthesized protein in an open conformation. Functions as a peptidyl-prolyl cis-trans isomerase. This Brucella melitensis biotype 1 (strain ATCC 23456 / CCUG 17765 / NCTC 10094 / 16M) protein is Trigger factor (tig).